The primary structure comprises 396 residues: Elongation factor Tu (396 aa).

The 196-residue stretch at K10 to E205 folds into the tr-type G domain. Residues G19–T26 are G1. G19–T26 contacts GTP. T26 is a binding site for Mg(2+). The segment at G62–N66 is G2. The segment at D83–G86 is G3. Residues D83 to H87 and N138 to D141 each bind GTP. Residues N138–D141 form a G4 region. The tract at residues S175–L177 is G5.

The protein belongs to the TRAFAC class translation factor GTPase superfamily. Classic translation factor GTPase family. EF-Tu/EF-1A subfamily. In terms of assembly, monomer.

The protein resides in the cytoplasm. It carries out the reaction GTP + H2O = GDP + phosphate + H(+). GTP hydrolase that promotes the GTP-dependent binding of aminoacyl-tRNA to the A-site of ribosomes during protein biosynthesis. The protein is Elongation factor Tu of Corynebacterium aurimucosum (strain ATCC 700975 / DSM 44827 / CIP 107346 / CN-1) (Corynebacterium nigricans).